The sequence spans 308 residues: uncharacterized protein (308 aa).

The next 7 membrane-spanning stretches (helical) occupy residues 10–30 (IILLSSIGITIASIIVETNLI), 91–111 (LPTILGESVFRVQLPLAVVIL), 115–135 (LGLIYVSLNVISGFLQALIGI), 178–198 (VIPMIVIFTLLINFLIKLGLM), 219–239 (ITVLIANLAHFSAGYTTVDIL), 251–271 (LIVLLIGNIISVTMIYLKHSI), and 288–308 (INYTISVMIKILLILLLIAFF).

It to M.jannaschii MJ0871, MJ1556 and MJ1589.

It is found in the cell membrane. This is an uncharacterized protein from Methanocaldococcus jannaschii (strain ATCC 43067 / DSM 2661 / JAL-1 / JCM 10045 / NBRC 100440) (Methanococcus jannaschii).